The sequence spans 702 residues: Polyphosphate kinase (702 aa).

Asparagine 55 contributes to the ATP binding site. Residues arginine 389 and arginine 419 each contribute to the Mg(2+) site. Histidine 449 (phosphohistidine intermediate) is an active-site residue. Tyrosine 482, arginine 578, and histidine 606 together coordinate ATP.

The protein belongs to the polyphosphate kinase 1 (PPK1) family. Mg(2+) serves as cofactor. Post-translationally, an intermediate of this reaction is the autophosphorylated ppk in which a phosphate is covalently linked to a histidine residue through a N-P bond.

It catalyses the reaction [phosphate](n) + ATP = [phosphate](n+1) + ADP. Its function is as follows. Catalyzes the reversible transfer of the terminal phosphate of ATP to form a long-chain polyphosphate (polyP). In Bacillus cereus (strain ATCC 14579 / DSM 31 / CCUG 7414 / JCM 2152 / NBRC 15305 / NCIMB 9373 / NCTC 2599 / NRRL B-3711), this protein is Polyphosphate kinase.